The following is a 391-amino-acid chain: Apolipoprotein A-IV (391 aa).

The signal sequence occupies residues 1-20 (MFLKAVVLTVALVAITGTQA). 13 repeat units span residues 33-54 (DYFT…KTDV), 60-81 (TLFQ…NKLV), 82-103 (PFAV…EEIQ), 115-136 (PHAN…EHLR), 137-158 (PYAT…RQLT), 159-180 (PYIQ…SSMV), 181-202 (PFAN…GQLT), 203-224 (PRAN…SRLA), 225-246 (PLAE…FQMK), 247-268 (KNAE…KNLA), 269-286 (PLVE…EGLQ), 287-308 (KSLE…RAVE), and 309-330 (PLGD…QQLG). The tract at residues 33 to 330 (DYFTQLSNNA…QMEKFRQQLG (298 aa)) is 13 X 22 AA approximate tandem repeats. Serine 333 is modified (phosphoserine). Residues 354–391 (FMSTLQKKGSPDQPLALPLPEQVQEQVQEQVQPKPLES) form a disordered region. Positions 371-391 (PLPEQVQEQVQEQVQPKPLES) are enriched in low complexity.

The protein belongs to the apolipoprotein A1/A4/E family. Homodimer. As to expression, secreted in plasma.

It localises to the secreted. May have a role in chylomicrons and VLDL secretion and catabolism. Required for efficient activation of lipoprotein lipase by ApoC-II; potent activator of LCAT. Apoa-IV is a major component of HDL and chylomicrons. The sequence is that of Apolipoprotein A-IV (Apoa4) from Rattus norvegicus (Rat).